We begin with the raw amino-acid sequence, 160 residues long: Phosphopantetheine adenylyltransferase (160 aa).

Threonine 10 lines the substrate pocket. ATP contacts are provided by residues 10 to 11 and histidine 18; that span reads TF. Residues lysine 42, leucine 74, and arginine 88 each coordinate substrate. Residues 89 to 91, glutamate 99, and 124 to 130 contribute to the ATP site; these read GLR and NSFISST.

Belongs to the bacterial CoaD family. In terms of assembly, homohexamer. Mg(2+) is required as a cofactor.

The protein localises to the cytoplasm. The catalysed reaction is (R)-4'-phosphopantetheine + ATP + H(+) = 3'-dephospho-CoA + diphosphate. It participates in cofactor biosynthesis; coenzyme A biosynthesis; CoA from (R)-pantothenate: step 4/5. Its function is as follows. Reversibly transfers an adenylyl group from ATP to 4'-phosphopantetheine, yielding dephospho-CoA (dPCoA) and pyrophosphate. The chain is Phosphopantetheine adenylyltransferase from Aeromonas salmonicida (strain A449).